Reading from the N-terminus, the 199-residue chain is Probable thymidylate kinase (199 aa).

Position 9–16 (9–16) interacts with ATP; the sequence is GIDGCGKT.

Belongs to the thymidylate kinase family.

The catalysed reaction is dTMP + ATP = dTDP + ADP. This chain is Probable thymidylate kinase, found in Methanococcus maripaludis (strain C6 / ATCC BAA-1332).